A 368-amino-acid polypeptide reads, in one-letter code: Protein RecA (368 aa).

80–87 (GPESSGKT) lines the ATP pocket. Polar residues predominate over residues 344-353 (NPTFTATPDS). Residues 344 to 368 (NPTFTATPDSENADNADDEFSEEEL) are disordered. The segment covering 354 to 368 (ENADNADDEFSEEEL) has biased composition (acidic residues).

Belongs to the RecA family.

Its subcellular location is the cytoplasm. Its function is as follows. Can catalyze the hydrolysis of ATP in the presence of single-stranded DNA, the ATP-dependent uptake of single-stranded DNA by duplex DNA, and the ATP-dependent hybridization of homologous single-stranded DNAs. It interacts with LexA causing its activation and leading to its autocatalytic cleavage. This chain is Protein RecA, found in Mannheimia haemolytica (Pasteurella haemolytica).